We begin with the raw amino-acid sequence, 444 residues long: Amino-acid acetyltransferase (444 aa).

The N-acetyltransferase domain maps to Glu295 to Ser434.

This sequence belongs to the acetyltransferase family. ArgA subfamily. Homohexamer.

Its subcellular location is the cytoplasm. The enzyme catalyses L-glutamate + acetyl-CoA = N-acetyl-L-glutamate + CoA + H(+). It functions in the pathway amino-acid biosynthesis; L-arginine biosynthesis; N(2)-acetyl-L-ornithine from L-glutamate: step 1/4. The polypeptide is Amino-acid acetyltransferase (Proteus mirabilis (strain HI4320)).